Consider the following 385-residue polypeptide: Phosphotransferase FrzJ (385 aa).

Positions 38 and 59 each coordinate ATP. Asp-245 is an active-site residue.

It belongs to the methylthioribose kinase family. Monomer.

It carries out the reaction (1S,3S,6S,7S,8S,9S)-6-[(4-methoxyphenyl)methyl]-3-(methylamino)-5-azatricyclo[6.3.1.0(1,5)]dodecane-7,9-diol + ATP = (-)-FR901483 + ADP + 2 H(+). The protein operates within secondary metabolite biosynthesis. Phosphotransferase; part of the gene cluster that mediates the biosynthesis of the alkaloid (-)-FR901483, a potent immunosuppressant that shows efficacy in animal models and a probable inhibitor of purine nucleotide biosynthesis by targeting phosphoribosylpyrophosphate amidotransferase (PPAT). FrzJ catalyzes the last step of the pathway by phosphorylating the C4'-OH of dephospho-(-)-FR901483 to produce (-)-FR901483. The biosynthesis of (-)-FR901483 starts with the condensation of two L-tyrosines to yield (S,S)-dityrosyl-piperazine. This process occurs in 3 steps with the non-canonical nonribosomal peptide synthetase FrzA catalyzing the reduction of L-tyrosine into L-tyrosinal, the spontaneous condensation of 2 L-tyrosinal units, and the subsequent reduction by the NmrA-like family domain-containing oxidoreductase FrzB. The cytochrome P450 monooxygenase FrzC then performs coupling between N10 and C1' to morph the piperazine into a 1,4-diazabicyclo[3.2.1]octane spiro-fused to a 2,5-cyclohexadienone. The dienone portion is further reduced to cyclohexanone by the flavin-dependent reductase FrzD. The methyltranserases (MTs) FrzE and FrzF are then involved in the methylation at the C10' amine and the C4 phenolic oxygen, respectively. The order of the two MTs appear to be interchangeable. Cleavage of the C9-N10' bond by the dioxygenase FrzG then leads to formation of a conjugated iminium. In addition to the oxidation of C9, an additional dehydrogenation between C7 and C8 can occur to give a likely shunt product. The next biosynthetic step is the intramolecular aldol condensation catalyzed by the newly identified aldolase FrzH to yield an aza-tricyclic product with the formation of a C9-C3' bond. The short-chain dehydrogenase/reductase FrzI then produces dephospho-(-)-FR901483 that is phosphorylated at C4'-OH into (-)-FR901483 by the phosphotransferase FrzJ. This Cladobotryum sp protein is Phosphotransferase FrzJ.